The following is a 438-amino-acid chain: MESQQLHQNPHSLHGSAYASVTSKEVPSNQDPLAVSASNLPEFDRDSTKVNSQEETTPGTSAVPENHHHVSPQPASVPPPQNGQYQQHGMMTPNKAMASNWAHYQQPSMMTCSHYQTSPAYYQPDPHYPLPQYIPPLSTSSPDPIDSQDQHSEVPQAKTKVRNNVLPPHTLTSEENFSTWVKFYIRFLKNSNLGDIIPNDQGEIKRQMTYEEHAYIYNTFQAFAPFHLLPTWVKQILEINYSDILTVLCKSVSKMQTNNQELKDWIALANLEYNGSTSADTFEITVSTIIQRLKENNINVSDRLACQLILKGLSGDFKYLRNQYRTKTNMKLSQLFAEIQLIYDENKIMNLNKPSQYKQHSEYKNVSRTSPNTTNTKVTTRNYHRTNSSKPRAAKAHNIATSSKFSRVNNDHINESTVSSQYLSDDNELSLRPATERI.

3 stretches are compositionally biased toward polar residues: residues 1 to 11 (MESQQLHQNPH), 19 to 39 (ASVT…SASN), and 49 to 60 (KVNSQEETTPGT). Disordered regions lie at residues 1 to 88 (MESQ…YQQH), 364 to 397 (KNVS…AKAH), and 418 to 438 (VSSQ…TERI). An RNA-binding region spans residues 295-397 (ENNINVSDRL…SSKPRAAKAH (103 aa)). Over residues 369 to 381 (TSPNTTNTKVTTR) the composition is skewed to low complexity.

As to quaternary structure, homotrimer.

Its subcellular location is the cytoplasm. Functionally, capsid protein (CA) is the structural component of the virus-like particle (VLP), forming the shell that encapsulates the retrotransposons dimeric RNA genome. The particles are assembled from trimer-clustered units and there are holes in the capsid shells that allow for the diffusion of macromolecules. CA also has nucleocapsid-like chaperone activity, promoting primer tRNA(i)-Met annealing to the multipartite primer-binding site (PBS), dimerization of Ty2 RNA and initiation of reverse transcription. This is Transposon Ty2-LR2 Gag polyprotein (TY2A-LR2) from Saccharomyces cerevisiae (strain ATCC 204508 / S288c) (Baker's yeast).